The sequence spans 348 residues: Protein RecA (348 aa).

ATP is bound at residue 65–72 (GPESSGKT). The interval 326-348 (QMGSESLSSSSDDDDIKEESGEE) is disordered. A compositionally biased stretch (acidic residues) spans 336-348 (SDDDDIKEESGEE).

This sequence belongs to the RecA family.

It is found in the cytoplasm. Functionally, can catalyze the hydrolysis of ATP in the presence of single-stranded DNA, the ATP-dependent uptake of single-stranded DNA by duplex DNA, and the ATP-dependent hybridization of homologous single-stranded DNAs. It interacts with LexA causing its activation and leading to its autocatalytic cleavage. This is Protein RecA from Campylobacter hominis (strain ATCC BAA-381 / DSM 21671 / CCUG 45161 / LMG 19568 / NCTC 13146 / CH001A).